We begin with the raw amino-acid sequence, 128 residues long: MKKLLLTVIQIALLFIFARLINWVTAALHINIPGSIIGIVILFTLLHFKIIKLEWIELGAAWLLGELLLFFIPSAVGVIEYGDIMSKFGVSILLVVVISTFVVMVSTGTLTQLIAKRKEKKQTCSSES.

4 helical membrane-spanning segments follow: residues 4-24 (LLLTVIQIALLFIFARLINWV), 27-46 (ALHINIPGSIIGIVILFTLL), 59-79 (GAAWLLGELLLFFIPSAVGVI), and 88-108 (FGVSILLVVVISTFVVMVSTG).

This sequence belongs to the CidA/LrgA family. CidA subfamily.

The protein resides in the cell membrane. Functionally, increases the activity of extracellular murein hydrolases possibly by mediating their export via hole formation. Inhibited by the antiholin-like proteins LrgAB. In an unstressed cell, the LrgAB products probably inhibit the function of the CidA protein. When a cell is stressed by the addition of antibiotics or by other factors in the environment, CidA possibly oligomerizes within the bacterial cell membrane, creating lesions that disrupt the proton motive force, which in turn results in loss of cell viability. These lesions are also hypothesized to regulate the subsequent cell lysis by either allowing the murein hydrolases access to the cell wall substrate and/or regulating their activity by a possible change in the cell wall pH that results from loss of membrane potential. This chain is Holin-like protein CidA, found in Bacillus velezensis (strain DSM 23117 / BGSC 10A6 / LMG 26770 / FZB42) (Bacillus amyloliquefaciens subsp. plantarum).